The primary structure comprises 536 residues: Putative cysteine ligase BshC (536 aa).

This sequence belongs to the BshC family.

Its function is as follows. Involved in bacillithiol (BSH) biosynthesis. May catalyze the last step of the pathway, the addition of cysteine to glucosamine malate (GlcN-Mal) to generate BSH. This Anoxybacillus flavithermus (strain DSM 21510 / WK1) protein is Putative cysteine ligase BshC.